The following is a 389-amino-acid chain: Leucine aminopeptidase 1 (389 aa).

Positions 1-19 are cleaved as a signal peptide; it reads MKLPALLTLGVAASTMVLA. A propeptide spanning residues 20–88 is cleaved from the precursor; that stretch reads AIAPDQVPLN…LPKVFPTPAV (69 aa). Residues Asn96, Asn119, Asn149, Asn164, and Asn181 are each glycosylated (N-linked (GlcNAc...) asparagine). Zn(2+)-binding residues include His189 and Asp208. Asn233 is a glycosylation site (N-linked (GlcNAc...) asparagine). The Zn(2+) site is built by Glu247 and Asp274. Cys323 and Cys327 are joined by a disulfide. A Zn(2+)-binding site is contributed by His356.

This sequence belongs to the peptidase M28 family. M28E subfamily. Monomer. Zn(2+) is required as a cofactor.

The protein localises to the secreted. Its function is as follows. Extracellular aminopeptidase that allows assimilation of proteinaceous substrates. The sequence is that of Leucine aminopeptidase 1 (LAP1) from Paracoccidioides brasiliensis (strain Pb18).